The chain runs to 354 residues: UDP-N-acetylglucosamine--N-acetylmuramyl-(pentapeptide) pyrophosphoryl-undecaprenol N-acetylglucosamine transferase (354 aa).

UDP-N-acetyl-alpha-D-glucosamine is bound by residues 12-14 (TGG), N124, R163, S187, I240, and Q285.

This sequence belongs to the glycosyltransferase 28 family. MurG subfamily.

Its subcellular location is the cell inner membrane. It catalyses the reaction di-trans,octa-cis-undecaprenyl diphospho-N-acetyl-alpha-D-muramoyl-L-alanyl-D-glutamyl-meso-2,6-diaminopimeloyl-D-alanyl-D-alanine + UDP-N-acetyl-alpha-D-glucosamine = di-trans,octa-cis-undecaprenyl diphospho-[N-acetyl-alpha-D-glucosaminyl-(1-&gt;4)]-N-acetyl-alpha-D-muramoyl-L-alanyl-D-glutamyl-meso-2,6-diaminopimeloyl-D-alanyl-D-alanine + UDP + H(+). The protein operates within cell wall biogenesis; peptidoglycan biosynthesis. Its function is as follows. Cell wall formation. Catalyzes the transfer of a GlcNAc subunit on undecaprenyl-pyrophosphoryl-MurNAc-pentapeptide (lipid intermediate I) to form undecaprenyl-pyrophosphoryl-MurNAc-(pentapeptide)GlcNAc (lipid intermediate II). In Methylococcus capsulatus (strain ATCC 33009 / NCIMB 11132 / Bath), this protein is UDP-N-acetylglucosamine--N-acetylmuramyl-(pentapeptide) pyrophosphoryl-undecaprenol N-acetylglucosamine transferase.